The chain runs to 269 residues: Formamidopyrimidine-DNA glycosylase (269 aa).

Catalysis depends on Pro-2, which acts as the Schiff-base intermediate with DNA. Glu-3 serves as the catalytic Proton donor. Residue Lys-57 is the Proton donor; for beta-elimination activity of the active site. Positions 90, 109, and 150 each coordinate DNA. The FPG-type zinc finger occupies 235–269; that stretch reads QVYGKAGEPCPECGEAIQEQKIGQRNTFYCSYCQC. Arg-259 acts as the Proton donor; for delta-elimination activity in catalysis.

It belongs to the FPG family. In terms of assembly, monomer. Requires Zn(2+) as cofactor.

The enzyme catalyses Hydrolysis of DNA containing ring-opened 7-methylguanine residues, releasing 2,6-diamino-4-hydroxy-5-(N-methyl)formamidopyrimidine.. The catalysed reaction is 2'-deoxyribonucleotide-(2'-deoxyribose 5'-phosphate)-2'-deoxyribonucleotide-DNA = a 3'-end 2'-deoxyribonucleotide-(2,3-dehydro-2,3-deoxyribose 5'-phosphate)-DNA + a 5'-end 5'-phospho-2'-deoxyribonucleoside-DNA + H(+). Involved in base excision repair of DNA damaged by oxidation or by mutagenic agents. Acts as a DNA glycosylase that recognizes and removes damaged bases. Has a preference for oxidized purines, such as 7,8-dihydro-8-oxoguanine (8-oxoG). Has AP (apurinic/apyrimidinic) lyase activity and introduces nicks in the DNA strand. Cleaves the DNA backbone by beta-delta elimination to generate a single-strand break at the site of the removed base with both 3'- and 5'-phosphates. The chain is Formamidopyrimidine-DNA glycosylase from Vibrio vulnificus (strain CMCP6).